The sequence spans 141 residues: Nucleoside diphosphate kinase 1 (141 aa).

Positions 11, 59, 87, 93, 104, and 114 each coordinate ATP. His117 (pros-phosphohistidine intermediate) is an active-site residue.

The protein belongs to the NDK family. Homotetramer. The cofactor is Mg(2+).

Its subcellular location is the cytoplasm. It carries out the reaction a 2'-deoxyribonucleoside 5'-diphosphate + ATP = a 2'-deoxyribonucleoside 5'-triphosphate + ADP. It catalyses the reaction a ribonucleoside 5'-diphosphate + ATP = a ribonucleoside 5'-triphosphate + ADP. Functionally, major role in the synthesis of nucleoside triphosphates other than ATP. The ATP gamma phosphate is transferred to the NDP beta phosphate via a ping-pong mechanism, using a phosphorylated active-site intermediate. In Protochlamydia amoebophila (strain UWE25), this protein is Nucleoside diphosphate kinase 1.